The sequence spans 347 residues: 4-hydroxy-2-oxovalerate aldolase (347 aa).

A Pyruvate carboxyltransferase domain is found at 11–262; the sequence is PVVVDTTLRD…NPGLDVFKLL (252 aa). Position 19 to 20 (19 to 20) interacts with substrate; it reads RD. A Mn(2+)-binding site is contributed by Asp20. His23 (proton acceptor) is an active-site residue. Substrate contacts are provided by Ser173 and His201. Mn(2+) is bound by residues His201 and His203. Tyr292 contacts substrate.

The protein belongs to the 4-hydroxy-2-oxovalerate aldolase family. In terms of assembly, homodimer. Can also form a heterotetramer composed of two aldolase (TTHB246) and two dehydrogenase (TTHB247) subunits. Upon complex formation, the aldolase shows a 5-fold increase in substrate affinity, while the dehydrogenase shows a 3-fold decrease; the kcat values of each enzyme are reduced by 2-fold when they are in a complex. It depends on Co(2+) as a cofactor. Ni(2+) serves as cofactor. Requires Mn(2+) as cofactor.

It carries out the reaction (S)-4-hydroxy-2-oxopentanoate = acetaldehyde + pyruvate. The enzyme catalyses (S)-4-hydroxy-2-oxohexanoate = propanal + pyruvate. With respect to regulation, appears to be allosterically activated by NADH. Its function is as follows. Catalyzes the retro-aldol cleavage of both 4-hydroxy-2-oxopentanoate (HOPA) and 4-hydroxy-2-oxohexanoate (HOHA) to pyruvate and acetaldehyde or propanaldehyde, respectively. The aldehydes produced by this reaction are directly channeled to the dehydrogenase TTHB247, ensuring that these toxic aldehydes are sequestered from cellular components. Is involved in the meta-cleavage pathway for the degradation of aromatic compounds. Appears to be stereospecific since it can cleave (4S)-4-hydroxy-2-oxopentanoate but not the (4R) isomer. Is not able to catalyze the aldol addition of 2-oxobutyrate with acetaldehyde; this indicates that the enzyme is specific for pyruvate as the carbonyl donor. The chain is 4-hydroxy-2-oxovalerate aldolase from Thermus thermophilus (strain ATCC 27634 / DSM 579 / HB8).